The sequence spans 94 residues: Aspartyl/glutamyl-tRNA(Asn/Gln) amidotransferase subunit C (94 aa).

Positions 72 to 94 (PREKALQGAPEVSEGQFKVPRVV) are disordered.

This sequence belongs to the GatC family. In terms of assembly, heterotrimer of A, B and C subunits.

It catalyses the reaction L-glutamyl-tRNA(Gln) + L-glutamine + ATP + H2O = L-glutaminyl-tRNA(Gln) + L-glutamate + ADP + phosphate + H(+). The catalysed reaction is L-aspartyl-tRNA(Asn) + L-glutamine + ATP + H2O = L-asparaginyl-tRNA(Asn) + L-glutamate + ADP + phosphate + 2 H(+). Its function is as follows. Allows the formation of correctly charged Asn-tRNA(Asn) or Gln-tRNA(Gln) through the transamidation of misacylated Asp-tRNA(Asn) or Glu-tRNA(Gln) in organisms which lack either or both of asparaginyl-tRNA or glutaminyl-tRNA synthetases. The reaction takes place in the presence of glutamine and ATP through an activated phospho-Asp-tRNA(Asn) or phospho-Glu-tRNA(Gln). In Moorella thermoacetica (strain ATCC 39073 / JCM 9320), this protein is Aspartyl/glutamyl-tRNA(Asn/Gln) amidotransferase subunit C.